Here is a 674-residue protein sequence, read N- to C-terminus: DNA ligase (674 aa).

Residues Asp35–Asp39, Ser84–Leu85, and Glu118 contribute to the NAD(+) site. The N6-AMP-lysine intermediate role is filled by Lys120. Residues Arg141, Glu184, Lys297, and Lys321 each contribute to the NAD(+) site. Positions 415, 418, 433, and 439 each coordinate Zn(2+). The BRCT domain maps to Leu598–Leu674.

It belongs to the NAD-dependent DNA ligase family. LigA subfamily. Mg(2+) is required as a cofactor. Mn(2+) serves as cofactor.

The catalysed reaction is NAD(+) + (deoxyribonucleotide)n-3'-hydroxyl + 5'-phospho-(deoxyribonucleotide)m = (deoxyribonucleotide)n+m + AMP + beta-nicotinamide D-nucleotide.. DNA ligase that catalyzes the formation of phosphodiester linkages between 5'-phosphoryl and 3'-hydroxyl groups in double-stranded DNA using NAD as a coenzyme and as the energy source for the reaction. It is essential for DNA replication and repair of damaged DNA. The polypeptide is DNA ligase (Chlorobium phaeovibrioides (strain DSM 265 / 1930) (Prosthecochloris vibrioformis (strain DSM 265))).